Reading from the N-terminus, the 47-residue chain is Protein YtiD (47 aa).

In Escherichia coli (strain K12), this protein is Protein YtiD (ytiD).